We begin with the raw amino-acid sequence, 367 residues long: Embryonic developmental protein tofu-6 (367 aa).

The region spanning 13-92 (AGFHIRNIPK…FTLKVTDHKN (80 aa)) is the RRM domain. The segment at 298-345 (KSILADRLQRKGVCEYLPRSQQPHYAYSRETLLQHNNSGVTAQISNDA) is required for ife-3 interaction.

In terms of assembly, component of the pid-1 variant of the PETISCO complex (also called the pid-3, erh-2, tofu-6, and ife-3 small RNA complex) containing at least pid-1, tofu-6, ife-3, pid-3, and erh-2, which is required for the biogenesis of 21 nucleotide PIWI-interacting RNAs (piRNAs) that possess a uracil residue at the 5'-end (also called 21U-RNAs). Within the pid-1 variant of the PETISCO complex interacts with pid-1. Component of the tost-1 variant of the PETISCO complex (also called the pid-3, erh-2, tofu-6, and ife-3 small RNA complex) containing at least tost-1, tofu-6, ife-3, pid-3, and erh-2, which plays an essential role in embryogenesis. Within the tost-1 variant of the PETISCO complex interacts with tost-1. Within the pid-1 and tost-1 variants of the PETISCO complexes interacts (via C-terminus) with ife-3. Within the pid-1 and tost-1 variants of the PETISCO complexes interacts (via the RRM domain) with pid-3. Within the pid-1 and tost-1 variants of the PETISCO complexes interacts (via the RRM domain) with erh-2. In contrast to the pid-1 variant of the PETISCO complex, the tost-1 variant of the PETISCO complex plays a minor role in the biogenesis of 21U-RNAs. Interacts (via residues 120-314) with the PUCH complex subunit tofu-1 (via residues 82-172); the interaction between the PETISCO and PUCH complex members enhances piRNA production in vivo. As to expression, expression is restricted to the germline (at protein level).

Its subcellular location is the cytoplasm. The protein localises to the perinuclear region. It is found in the nucleus. In terms of biological role, component of the pid-1 and tost-1 variants of the PETISCO complexes, which have roles in the biogenesis of a class of 21 nucleotide PIWI-interacting RNAs (piRNAs) that possess a uracil residue at the 5'-end (also called 21U-RNAs) and embryogenesis, respectively. Promotes the biogenesis of 21U-RNAs. Mediates the interaction between the PETISCO complex and the PUCH complex, the endoribonuclease complex processing the 5'-end of precursor piRNAs, thereby enhancing mature piRNA production. Required for chromosome segregation and cell division in early embryos. May have a role in DNA replication. The protein is Embryonic developmental protein tofu-6 of Caenorhabditis elegans.